A 649-amino-acid polypeptide reads, in one-letter code: Probable potassium transport system protein Kup (649 aa).

12 consecutive transmembrane segments (helical) span residues 1 to 21, 42 to 62, 84 to 104, 126 to 146, 159 to 179, 195 to 215, 235 to 255, 286 to 306, 334 to 354, 364 to 384, 390 to 410, and 414 to 434; these read MAIV…LYTM, ILSL…VFIA, GAWL…DSVL, IMSG…VCLF, TFGT…LVNL, VEFL…TVFL, IYFT…GQGA, VAVL…ITGA, LYIP…LAMF, YGLA…VYIW, VGAV…FFAS, and FLHG…IMYT.

It belongs to the HAK/KUP transporter (TC 2.A.72) family.

The protein resides in the cell membrane. The catalysed reaction is K(+)(in) + H(+)(in) = K(+)(out) + H(+)(out). In terms of biological role, transport of potassium into the cell. Likely operates as a K(+):H(+) symporter. This Bifidobacterium adolescentis (strain ATCC 15703 / DSM 20083 / NCTC 11814 / E194a) protein is Probable potassium transport system protein Kup.